A 449-amino-acid chain; its full sequence is Probable pectate lyase P59 (449 aa).

The signal sequence occupies residues methionine 1–proline 22. N-linked (GlcNAc...) asparagine glycosylation is found at asparagine 56, asparagine 80, and asparagine 81. Residues aspartate 245, aspartate 269, and aspartate 273 each contribute to the Ca(2+) site. Arginine 325 is a catalytic residue.

Belongs to the polysaccharide lyase 1 family. Ca(2+) is required as a cofactor. In terms of tissue distribution, expressed in anthers and pollen.

It catalyses the reaction Eliminative cleavage of (1-&gt;4)-alpha-D-galacturonan to give oligosaccharides with 4-deoxy-alpha-D-galact-4-enuronosyl groups at their non-reducing ends.. The protein operates within glycan metabolism; pectin degradation; 2-dehydro-3-deoxy-D-gluconate from pectin: step 2/5. Might be needed during pollen development and tube growth. The polypeptide is Probable pectate lyase P59 (LAT59) (Solanum lycopersicum (Tomato)).